Consider the following 339-residue polypeptide: 2-keto-3-deoxygluconate permease (339 aa).

Transmembrane regions (helical) follow at residues 10 to 30 (IPGG…TFAP), 42 to 62 (GLIS…GASI), 77 to 97 (LVVT…RILP), 100 to 120 (GVEV…AMDM), 141 to 161 (AFVL…LGTA), 163 to 183 (IASF…VGFA), 199 to 219 (VQTL…LSVI), 224 to 244 (LLGV…LIVA), 254 to 274 (TAGI…VLIA), and 289 to 309 (TLVA…TAMW). Positions 315–339 (GGDGTVPKEDAVEEKAEQQRRRIIK) are disordered. Over residues 320 to 339 (VPKEDAVEEKAEQQRRRIIK) the composition is skewed to basic and acidic residues.

Belongs to the KdgT transporter family.

Its subcellular location is the cell inner membrane. It catalyses the reaction 2-dehydro-3-deoxy-D-gluconate(in) + H(+)(in) = 2-dehydro-3-deoxy-D-gluconate(out) + H(+)(out). With respect to regulation, uptake is inhibited by the protonophore uncouplers carbonyl cyanide m-chlorophenylhydrazone (CCCP) and 2,4-dinitrophenol, and by NaN(3). Catalyzes the proton-dependent uptake of 2-keto-3-deoxygluconate (KDG) into the cell. Can also mediate the uptake of glucuronate with a low affinity, and may mediate the uptake of 5-keto-4-deoxyuronate (DKI) and 2,5-diketo-3-deoxygluconate (DKII), which are intermediates in pectin degradation. This is 2-keto-3-deoxygluconate permease from Dickeya chrysanthemi (Pectobacterium chrysanthemi).